A 66-amino-acid polypeptide reads, in one-letter code: Large ribosomal subunit protein bL32 (66 aa).

The span at Met-1–Gln-19 shows a compositional bias: basic residues. The tract at residues Met-1–Trp-20 is disordered.

This sequence belongs to the bacterial ribosomal protein bL32 family.

This Beutenbergia cavernae (strain ATCC BAA-8 / DSM 12333 / CCUG 43141 / JCM 11478 / NBRC 16432 / NCIMB 13614 / HKI 0122) protein is Large ribosomal subunit protein bL32.